A 123-amino-acid polypeptide reads, in one-letter code: uncharacterized protein (123 aa).

The next 2 helical transmembrane spans lie at V53–L73 and V75–H95.

Its subcellular location is the membrane. This is an uncharacterized protein from Saccharomyces cerevisiae (strain ATCC 204508 / S288c) (Baker's yeast).